Reading from the N-terminus, the 246-residue chain is MLESEVSKQITTPLAAPAFPRGPYRFHNREYLNIIYRTDLDALRKIVPEPLELDRAYVRFEMMAMPDTTGLGSYTECGQAIPVKYNGVKGDYLHMMYLDNEPAIAVGRESSAYPKKLGYPKLFVDSDTLVGTLKYGTLPVATATMGYKHEPLDLKEAYAQIARPNFMLKIIQGYDGKPRICELICAENTDITIHGAWTGSARLQLFSHALAPLADLPVLEIVSASHILTDLTLGTPKVVHDYLSVK.

Residue Lys-115 is the Schiff-base intermediate with acetoacetate of the active site.

It belongs to the ADC family.

It catalyses the reaction acetoacetate + H(+) = acetone + CO2. Catalyzes the conversion of acetoacetate to acetone and carbon dioxide. This is Acetoacetate decarboxylase from Clostridium beijerinckii (strain ATCC 51743 / NCIMB 8052) (Clostridium acetobutylicum).